A 564-amino-acid chain; its full sequence is MSPAATETERWCVVTGGRGFAARHLVEMLVRYEMFCVRIADLAPAIMLDPQEGNGVLDEGLRSGRVQYISADLRDKSQVVKAFQGAEVVFHMAAPDSSINNHQLQYSVNVQGTQNVIDACVDVGVKRLIYTSSPSVVFDGVHGILNGTESMAYPIKHNDSYSATKAEGEELIMKANGRNGLLTCCIRPSSIFGPGDRLLVPSLVAAARAGKSKFIIGDGNNLYDFTYVENVAHAHVCAERALASGGDVSTKAAGQAYFITNMEPIKFWEFMSQLLDGLGYERPSIKIPAFIMMPIAHLVELTYKVLGPYGMTVPQLTPSRVRLLSCSRTFDSTKAKDRLGYAPVVPLQEGIRRTIDSFSHLTAGSQSKREGPSKASRILGGGKVADTLLWKDLKQTLIAIFILISIYYNFVATGSTVVTALSKALLVASVFLFLHGILPEKIFGYTVEKIPASQFHLSKDSSHDLSLSVISSWNTTVKALRSLCQGNDWSFFFKVVFVLLALSLAGAISLHSIFVIGLPIAFLAFLVYEKKEQEIDSIVVSFKSFACKHKSDVYEKLFGSKKHD.

An NAD(+)-binding site is contributed by Gly16–Ala21. 2 N-linked (GlcNAc...) asparagine glycosylation sites follow: Asn146 and Asn158. NAD(+)-binding residues include Tyr161 and Lys165. Lys165 (proton donor) is an active-site residue. Positions Val384–Asp564 constitute a Reticulon domain. Helical transmembrane passes span Ile398 to Val418 and Ala424 to Gly444. N-linked (GlcNAc...) asparagine glycosylation occurs at Asn474. A run of 2 helical transmembrane segments spans residues Gly486–Gly506 and Ala507–Val527.

This sequence belongs to the 3-beta-HSD family.

The protein localises to the endoplasmic reticulum membrane. It catalyses the reaction a 3beta-hydroxysteroid-4alpha-carboxylate + NAD(+) = a 3-oxosteroid + CO2 + NADH. It carries out the reaction 4alpha-carboxy-4beta,14alpha-dimethyl-9beta,19-cyclo-5alpha-ergost-24(24(1))-en-3beta-ol + NAD(+) = cycloeucalenone + CO2 + NADH. It functions in the pathway steroid biosynthesis; zymosterol biosynthesis; zymosterol from lanosterol: step 4/6. 3beta-hydroxysteroid-dehydrogenase/decarboxylase involved in sterol synthesis. Catalyzes the formation of 3-oxosteroids from 3beta-hydroxysteroids-4alpha-carboxylate. Involved in the regulation of inflorescence internodes and leaves growth, probably by affecting auxin transporter activity possibly by altering sterol composition in the membranes. The protein is 3beta-hydroxysteroid-dehydrogenase/decarboxylase isoform 2 of Arabidopsis thaliana (Mouse-ear cress).